The primary structure comprises 695 residues: Elongation factor G (695 aa).

The region spanning 8 to 282 (EKTRNIGIMA…AVLDYLPAPT (275 aa)) is the tr-type G domain. Residues 17–24 (AHIDAGKT), 81–85 (DTPGH), and 135–138 (NKMD) each bind GTP.

The protein belongs to the TRAFAC class translation factor GTPase superfamily. Classic translation factor GTPase family. EF-G/EF-2 subfamily.

It is found in the cytoplasm. Catalyzes the GTP-dependent ribosomal translocation step during translation elongation. During this step, the ribosome changes from the pre-translocational (PRE) to the post-translocational (POST) state as the newly formed A-site-bound peptidyl-tRNA and P-site-bound deacylated tRNA move to the P and E sites, respectively. Catalyzes the coordinated movement of the two tRNA molecules, the mRNA and conformational changes in the ribosome. The protein is Elongation factor G of Listeria monocytogenes serotype 4b (strain CLIP80459).